The following is a 561-amino-acid chain: Arginine--tRNA ligase (561 aa).

The 'HIGH' region motif lies at 108–118 (PNVAKEMHVGH).

It belongs to the class-I aminoacyl-tRNA synthetase family. In terms of assembly, monomer.

The protein localises to the cytoplasm. It carries out the reaction tRNA(Arg) + L-arginine + ATP = L-arginyl-tRNA(Arg) + AMP + diphosphate. The sequence is that of Arginine--tRNA ligase from Haemophilus ducreyi (strain 35000HP / ATCC 700724).